The following is a 254-amino-acid chain: MSQVRTVSDTKRDFYTHHTRPINSIFRRVVEELLVEMHLLSVNADFRYDPFYALGVVTSFERFMQGYRPEADKVSIFQSMCQAIGGDANRYKEDAMALVELAKRCSGTQLIECFRQDVPPEGAQELWEKIEAIAKNDHFKYSRLFAIGVYTFLGESEPQLLEDTEKRDEMLTTVTAGLNLPEEKMKKDLDLYRSNLEKMNQVLEVLEDALAVERQRREKAEAEAKAKTAEATVATETNDEQDEQKETSESGSDA.

A coiled-coil region spans residues 182-241; sequence EEKMKKDLDLYRSNLEKMNQVLEVLEDALAVERQRREKAEAEAKAKTAEATVATETNDEQ. Residues 215 to 228 are compositionally biased toward basic and acidic residues; it reads QRREKAEAEAKAKT. A disordered region spans residues 215–254; the sequence is QRREKAEAEAKAKTAEATVATETNDEQDEQKETSESGSDA.

This sequence belongs to the THF1 family.

Functionally, may be involved in photosynthetic membrane biogenesis. This is Protein Thf1 from Picosynechococcus sp. (strain ATCC 27264 / PCC 7002 / PR-6) (Agmenellum quadruplicatum).